The sequence spans 177 residues: MARTNTRKAILAGGCFWGIQNLFRRQPGVISTRVGYTGGGTPNATYRNHGMHAEAVEIIYDPAITDYRTLLEFFFQIHDPTTRNRQGNDQGTSYRSAIFYLDDEQKKVALDTIAAVEASSLWPGKVVTEVSLAEDFWEAEPEHQDYLQHYPNGYTCHFVRPNWKLPRRAPADAKADS.

The active site involves Cys15.

Belongs to the MsrA Met sulfoxide reductase family.

The enzyme catalyses L-methionyl-[protein] + [thioredoxin]-disulfide + H2O = L-methionyl-(S)-S-oxide-[protein] + [thioredoxin]-dithiol. It catalyses the reaction [thioredoxin]-disulfide + L-methionine + H2O = L-methionine (S)-S-oxide + [thioredoxin]-dithiol. In terms of biological role, has an important function as a repair enzyme for proteins that have been inactivated by oxidation. Catalyzes the reversible oxidation-reduction of methionine sulfoxide in proteins to methionine. The polypeptide is Peptide methionine sulfoxide reductase MsrA (Mycobacterium leprae (strain Br4923)).